Here is a 762-residue protein sequence, read N- to C-terminus: Cellulose synthase-like protein H2 (762 aa).

Residues 1–15 are compositionally biased toward low complexity; that stretch reads MAVVAAAAATGSTTR. The interval 1-39 is disordered; the sequence is MAVVAAAAATGSTTRSGGGGGEGTRSGRKKPPPPPLQER. 2 helical membrane passes run 47–67 and 81–101; these read AWAW…LLAL and GVWR…ALNV. Active-site residues include D180 and D470. A run of 6 helical transmembrane segments spans residues 541–561, 582–602, 619–639, 673–693, 708–728, and 739–759; these read LAYL…CYGL, FSVP…EYMA, IISV…SLGL, LPVF…VTVG, APGI…FPFV, and GIPW…VTFC.

This sequence belongs to the glycosyltransferase 2 family. Plant cellulose synthase-like H subfamily.

The protein localises to the golgi apparatus membrane. Thought to be a Golgi-localized beta-glycan synthase that polymerize the backbones of noncellulosic polysaccharides (hemicelluloses) of plant cell wall. This is Cellulose synthase-like protein H2 (CSLH2) from Oryza sativa subsp. indica (Rice).